A 175-amino-acid chain; its full sequence is Peptide methionine sulfoxide reductase MsrA (175 aa).

Cysteine 10 is an active-site residue.

Belongs to the MsrA Met sulfoxide reductase family.

It catalyses the reaction L-methionyl-[protein] + [thioredoxin]-disulfide + H2O = L-methionyl-(S)-S-oxide-[protein] + [thioredoxin]-dithiol. The catalysed reaction is [thioredoxin]-disulfide + L-methionine + H2O = L-methionine (S)-S-oxide + [thioredoxin]-dithiol. In terms of biological role, has an important function as a repair enzyme for proteins that have been inactivated by oxidation. Catalyzes the reversible oxidation-reduction of methionine sulfoxide in proteins to methionine. This is Peptide methionine sulfoxide reductase MsrA from Psychrobacter sp. (strain PRwf-1).